The following is a 721-amino-acid chain: Glycine--tRNA ligase beta subunit (721 aa).

The protein belongs to the class-II aminoacyl-tRNA synthetase family. In terms of assembly, tetramer of two alpha and two beta subunits.

Its subcellular location is the cytoplasm. The catalysed reaction is tRNA(Gly) + glycine + ATP = glycyl-tRNA(Gly) + AMP + diphosphate. In Sinorhizobium medicae (strain WSM419) (Ensifer medicae), this protein is Glycine--tRNA ligase beta subunit.